The sequence spans 369 residues: Signal recognition particle receptor FtsY (369 aa).

Over residues glycine 20 to threonine 42 the composition is skewed to basic and acidic residues. The interval glycine 20–isoleucine 58 is disordered. A compositionally biased stretch (low complexity) spans glutamine 44 to glutamine 53. GTP is bound by residues glycine 180–threonine 187, aspartate 262–arginine 266, and threonine 320–aspartate 323.

The protein belongs to the GTP-binding SRP family. FtsY subfamily. In terms of assembly, part of the signal recognition particle protein translocation system, which is composed of SRP and FtsY.

Its subcellular location is the cell membrane. The protein localises to the cytoplasm. It carries out the reaction GTP + H2O = GDP + phosphate + H(+). In terms of biological role, involved in targeting and insertion of nascent membrane proteins into the cytoplasmic membrane. Acts as a receptor for the complex formed by the signal recognition particle (SRP) and the ribosome-nascent chain (RNC). The polypeptide is Signal recognition particle receptor FtsY (Sulfolobus acidocaldarius (strain ATCC 33909 / DSM 639 / JCM 8929 / NBRC 15157 / NCIMB 11770)).